A 191-amino-acid polypeptide reads, in one-letter code: Putative acetyltransferase DDB_G0280825 (191 aa).

Belongs to the transferase hexapeptide repeat family.

This is Putative acetyltransferase DDB_G0280825 from Dictyostelium discoideum (Social amoeba).